The chain runs to 190 residues: Ladderlectin (190 aa).

Residues 1-18 form the signal peptide; the sequence is MAMLTISLLLCAAVALNG. One can recognise a C-type lectin domain in the interval 60–179; it reads GSRCFMFVET…GNSFPSGVLQ (120 aa). A disulfide bridge connects residues Cys153 and Cys169.

Multimeric. In terms of tissue distribution, expressed in cells of the branchial epithelium, hepatic sinusoids, biliary epithelium, renal interstitium, skin, and sub-mucosal granular layer of the intestine. Highly expressed in caudal kidney. Moderately expressed in liver. Weakly expressed in gill, spleen, cranial kidney and skin. Isoform 1 is highly expressed in intestine. Isoform 2 is weakly expressed in intestine.

Functionally, lectin that binds sepharose in a calcium-dependent manner. The sequence is that of Ladderlectin from Oncorhynchus mykiss (Rainbow trout).